Here is a 446-residue protein sequence, read N- to C-terminus: UDP-N-acetylmuramoylalanine--D-glutamate ligase (446 aa).

Residue 115–121 (GSNGKST) participates in ATP binding.

This sequence belongs to the MurCDEF family.

The protein localises to the cytoplasm. It carries out the reaction UDP-N-acetyl-alpha-D-muramoyl-L-alanine + D-glutamate + ATP = UDP-N-acetyl-alpha-D-muramoyl-L-alanyl-D-glutamate + ADP + phosphate + H(+). It participates in cell wall biogenesis; peptidoglycan biosynthesis. In terms of biological role, cell wall formation. Catalyzes the addition of glutamate to the nucleotide precursor UDP-N-acetylmuramoyl-L-alanine (UMA). This is UDP-N-acetylmuramoylalanine--D-glutamate ligase from Hahella chejuensis (strain KCTC 2396).